Consider the following 481-residue polypeptide: Glutamate--tRNA ligase (481 aa).

The 'HIGH' region signature appears at P9–T19. The 'KMSKS' region signature appears at K249–R253. K252 lines the ATP pocket.

The protein belongs to the class-I aminoacyl-tRNA synthetase family. Glutamate--tRNA ligase type 1 subfamily. Monomer.

The protein resides in the cytoplasm. It catalyses the reaction tRNA(Glu) + L-glutamate + ATP = L-glutamyl-tRNA(Glu) + AMP + diphosphate. In terms of biological role, catalyzes the attachment of glutamate to tRNA(Glu) in a two-step reaction: glutamate is first activated by ATP to form Glu-AMP and then transferred to the acceptor end of tRNA(Glu). The protein is Glutamate--tRNA ligase of Picosynechococcus sp. (strain ATCC 27264 / PCC 7002 / PR-6) (Agmenellum quadruplicatum).